A 217-amino-acid polypeptide reads, in one-letter code: Trichothecene biosynthesis transcription regulator TRI6 (217 aa).

The C2H2-type zinc-finger motif lies at 185–215; sequence VRCPWHDQEGQQCLRVFSRVDNMRDHYRRIH.

It is found in the nucleus. Transcriptional activator of part of the core trichothecene biosynthesis cluster. In Fusarium sporotrichioides, this protein is Trichothecene biosynthesis transcription regulator TRI6.